Here is a 198-residue protein sequence, read N- to C-terminus: CASP-like protein 4B3 (198 aa).

The tract at residues 1 to 27 (MSSSGPPAGDGRDDASGPGPAGAAAAA) is disordered. Residues 1-51 (MSSSGPPAGDGRDDASGPGPAGAAAAADGSVPVSRSIVERWKMEPAAARAR) lie on the Cytoplasmic side of the membrane. Low complexity predominate over residues 16–27 (SGPGPAGAAAAA). A helical transmembrane segment spans residues 52–72 (LLLRAVAWLFSLLALVVMASN). Residues 73-85 (KHGHGGAQDFDNY) are Extracellular-facing. A helical membrane pass occupies residues 86 to 106 (PEYTYCLGISIIAVLYTTAQV). Residues 107–124 (TRDVHRLSWGRDVIAGRK) lie on the Cytoplasmic side of the membrane. The chain crosses the membrane as a helical span at residues 125–145 (AAAVVDFAGDQVVAYLLMSAL). At 146 to 166 (SAAAPVTDYMRQAADNLFTDS) the chain is on the extracellular side. The chain crosses the membrane as a helical span at residues 167-187 (AAAAISMAFLAFLAAGLSALV). The Cytoplasmic portion of the chain corresponds to 188-198 (SGYNLAMEVLV).

It belongs to the Casparian strip membrane proteins (CASP) family. Homodimer and heterodimers.

The protein resides in the cell membrane. This is CASP-like protein 4B3 from Oryza sativa subsp. japonica (Rice).